The chain runs to 1098 residues: NACHT, LRR and PYD domains-containing protein 5 (1098 aa).

Positions 1–97 (MREAKIAPLS…SEMARDEMKK (97 aa)) constitute a Pyrin domain. The interval 104-131 (SEDSAPTKTDQGPSMKEVPGPREDPQDS) is disordered. Positions 122–131 (PGPREDPQDS) are enriched in basic and acidic residues. Residues 180 to 503 (LTVVLHGPPG…ALFYVLRGVE (324 aa)) form the NACHT domain. 186 to 193 (GPPGVGKS) is a binding site for ATP. 7 LRR repeats span residues 851–871 (GLTH…SLLC), 880–900 (GLQK…GFLA), 908–928 (HLTH…NLLC), 937–958 (PLRD…SLSN), 965–985 (RLRS…AALC), 993–1013 (TLTR…KALS), and 1021–1041 (HLAS…TTLC).

This sequence belongs to the NLRP family. In terms of assembly, component of the subcortical maternal complex (SCMC), at least composed of NLRP5, KHDC3, OOEP, and TLE6. Within the complex, interacts with OOEP, KHDC3 and TLE6. The SCMC may facilitate translocation of its components between the nuclear and cytoplasmic compartments. As part of the SCMC interacts with the SCMC-associated protein ZBED3. As part of the SCMC interacts with the SCMC-associated protein CFL1/Cofilin-1. Interacts with PRKCE. Interacts with TUBB3 at cytoskeleton microtubules. In terms of processing, phosphorylated by PRKCE. Oocyte-specific.

It localises to the cytoplasm. It is found in the cytoplasmic vesicle. Its subcellular location is the secretory vesicle. The protein resides in the cortical granule. The protein localises to the mitochondrion. It localises to the nucleus. It is found in the nucleolus. Its subcellular location is the golgi apparatus. Its function is as follows. Component of the subcortical maternal complex (SCMC), a multiprotein complex that plays a key role in early embryonic development. The SCMC complex is a structural constituent of cytoplasmic lattices, which consist in fibrous structures found in the cytoplasm of oocytes and preimplantation embryos. They are required to store maternal proteins critical for embryonic development, such as proteins that control epigenetic reprogramming of the preimplantation embryo, and prevent their degradation or activation. Required for the localization of cortical granules to the cortex of oocytes, via association with the cortical actin scaffold. Required for cortical actin clearance prior to oocyte exocytosis and prevention of polyspermy. Involved in regulating post-fertilization Ca(2+) release and endoplasmic reticulum storage (ER) storage via regulation of cellular localization. May be involved in the localization of mitochondria to the cytoplasm and perinuclear region in oocytes and early stage embryos, independent of its role in CPL formation. The chain is NACHT, LRR and PYD domains-containing protein 5 (NLRP5) from Bos taurus (Bovine).